Consider the following 185-residue polypeptide: UPF0397 protein PAM_019 (185 aa).

5 helical membrane-spanning segments follow: residues I13–F33, A42–I62, F69–I89, I109–P129, and V143–I163.

This sequence belongs to the UPF0397 family.

The protein resides in the cell membrane. This Onion yellows phytoplasma (strain OY-M) protein is UPF0397 protein PAM_019.